The chain runs to 301 residues: Methionyl-tRNA formyltransferase (301 aa).

109-112 (SLLP) is a binding site for (6S)-5,6,7,8-tetrahydrofolate.

This sequence belongs to the Fmt family.

It catalyses the reaction L-methionyl-tRNA(fMet) + (6R)-10-formyltetrahydrofolate = N-formyl-L-methionyl-tRNA(fMet) + (6S)-5,6,7,8-tetrahydrofolate + H(+). Its function is as follows. Attaches a formyl group to the free amino group of methionyl-tRNA(fMet). The formyl group appears to play a dual role in the initiator identity of N-formylmethionyl-tRNA by promoting its recognition by IF2 and preventing the misappropriation of this tRNA by the elongation apparatus. This is Methionyl-tRNA formyltransferase from Novosphingobium aromaticivorans (strain ATCC 700278 / DSM 12444 / CCUG 56034 / CIP 105152 / NBRC 16084 / F199).